Reading from the N-terminus, the 90-residue chain is Putative transcript Y 12 protein (90 aa).

The sequence is that of Putative transcript Y 12 protein (TTTY12) from Homo sapiens (Human).